Here is a 171-residue protein sequence, read N- to C-terminus: CS1 fimbrial subunit A (171 aa).

The N-terminal stretch at 1-23 is a signal peptide; the sequence is MKLKKTIGAMALATLFATMGASA.

It belongs to the fimbrial CS1 protein family.

It localises to the fimbrium. In terms of biological role, fimbriae (also called pili), polar filaments radiating from the surface of the bacterium to a length of 0.5-1.5 micrometers and numbering 100-300 per cell, enable bacteria to colonize the epithelium of specific host organs. The sequence is that of CS1 fimbrial subunit A (csoA) from Escherichia coli.